The chain runs to 156 residues: Small ribosomal subunit protein uS7 (156 aa).

The protein belongs to the universal ribosomal protein uS7 family. In terms of assembly, part of the 30S ribosomal subunit. Contacts proteins S9 and S11.

In terms of biological role, one of the primary rRNA binding proteins, it binds directly to 16S rRNA where it nucleates assembly of the head domain of the 30S subunit. Is located at the subunit interface close to the decoding center, probably blocks exit of the E-site tRNA. The polypeptide is Small ribosomal subunit protein uS7 (Nitratiruptor sp. (strain SB155-2)).